Reading from the N-terminus, the 132-residue chain is Small ribosomal subunit protein uS8 (132 aa).

It belongs to the universal ribosomal protein uS8 family. As to quaternary structure, part of the 30S ribosomal subunit. Contacts proteins S5 and S12.

Functionally, one of the primary rRNA binding proteins, it binds directly to 16S rRNA central domain where it helps coordinate assembly of the platform of the 30S subunit. The chain is Small ribosomal subunit protein uS8 from Francisella tularensis subsp. novicida (strain U112).